Reading from the N-terminus, the 627-residue chain is Neuronal acetylcholine receptor subunit alpha-4 (627 aa).

An N-terminal signal peptide occupies residues 1–31 (MELGGPGAPPPPLLPPLLLLLGAGFLPASSP). At 32-244 (VETRAHAEER…ITYAFVIRRL (213 aa)) the chain is on the extracellular side. Asn59 carries an N-linked (GlcNAc...) asparagine glycan. Residues Val78 and Glu80 each contribute to the Ca(2+) site. Asn109 and Asn176 each carry an N-linked (GlcNAc...) asparagine glycan. 2 disulfide bridges follow: Cys163–Cys177 and Cys227–Cys228. The chain crosses the membrane as a helical span at residues 245-269 (PLFYTINLIVPCLLISCLTVLVFYL). Residue Cys273 is the site of S-palmitoyl cysteine attachment. 2 helical membrane passes run 277 to 295 (VTLC…LLIT) and 311 to 332 (YLLF…VLNV). At 333-600 (HHRSPRTHTM…WKYVAMVIDR (268 aa)) the chain is on the cytoplasmic side. The segment covering 384-399 (PGFWPEPEGEPGVVSG) has biased composition (low complexity). The segment at 384-463 (PGFWPEPEGE…PPPSTRAPGL (80 aa)) is disordered. A Phosphoserine modification is found at Ser427. A compositionally biased stretch (pro residues) spans 444–458 (SPCPLPDSCRPPPST). At Ser541 the chain carries Phosphoserine. Residues 601–619 (IFLWVFVIVCLLGTAGLFL) traverse the membrane as a helical segment.

It belongs to the ligand-gated ion channel (TC 1.A.9) family. Acetylcholine receptor (TC 1.A.9.1) subfamily. Alpha-4/CHRNA4 sub-subfamily. In terms of assembly, neuronal AChR is composed of two different types of subunits: alpha and beta. CHRNA4 forms heteropentameric neuronal acetylcholine receptors with CHRNB2 and CHRNB4, as well as CHRNA5 and CHRNB3 as accesory subunits. Found in two major stoichiometric forms, LS (low agonist sensitivity): (CHRNA4)3:(CHRNB2)2 and HS (high agonist sensitivity): (CHRNA4)2:(CHRNB2)3, the two stoichiometric forms differ in their unitary conductance, calcium permeability, ACh sensitivity and potentiation by divalent cation. Cells produce predominantly an (CHRNA4)3:(CHRNB2)2 nAChR. The (CHRNA4)2:(CHRNB2)3 expression is selectively up-regulated by nicotine and has lower single channel conductance and calcium permeability. In the striatum, also forms CHRNA4:CHRNA6:CHRNB2 complexes. Also found in the stoichiometric form: (CHRNA4:CHRNB2)2:CHRNB3. Interacts with RIC3; which is required for proper folding and assembly. Interacts with LYPD6.

Its subcellular location is the synaptic cell membrane. The protein localises to the cell membrane. The catalysed reaction is Ca(2+)(in) = Ca(2+)(out). It catalyses the reaction K(+)(in) = K(+)(out). It carries out the reaction Na(+)(in) = Na(+)(out). Activated by a myriad of ligands such as acetylcholine, cytisine, nicotine, choline and epibatidine. Channel potentiation by calcium is stoichiometry-selective, CHRNA4:CHRNB2 nACh receptor is achieved by calcium association with topographically distinct sites framed by anionic residues within the CHRNA4 subunit and between the CHRNA4 and CHRNB2 subunits. nAChR activity is inhibited by the antagonist alpha-conotoxins BuIA, PnIA, GID and MII, small disulfide-constrained peptides from cone snails. In terms of biological role, component of neuronal acetylcholine receptors (nAChRs) that function as pentameric, ligand-gated cation channels with high calcium permeability among other activities. nAChRs are excitatory neurotrasnmitter receptors formed by a collection of nAChR subunits known to mediate synaptic transmission in the nervous system and the neuromuscular junction. Each nAchR subunit confers differential attributes to channel properties, including activation, deactivation and desensitization kinetics, pH sensitivity, cation permeability, and binding to allosteric modulators. CHRNA4 forms heteropentameric neuronal acetylcholine receptors with CHRNB2 and CHRNB4, as well as CHRNA5 and CHRNB3 as accesory subunits. Is the most abundant nAChR subtype expressed in the central nervous system. Found in two major stoichiometric forms,(CHRNA4)3:(CHRNB2)2 and (CHRNA4)2:(CHRNB2)3, the two stoichiometric forms differ in their unitary conductance, calcium permeability, ACh sensitivity and potentiation by divalent cation. Involved in the modulation of calcium-dependent signaling pathways, influences the release of neurotransmitters, including dopamine, glutamate and GABA. The sequence is that of Neuronal acetylcholine receptor subunit alpha-4 (CHRNA4) from Mustela putorius furo (European domestic ferret).